The primary structure comprises 265 residues: Tryptophan synthase alpha chain (265 aa).

Catalysis depends on proton acceptor residues E49 and D60.

Belongs to the TrpA family. As to quaternary structure, tetramer of two alpha and two beta chains.

The enzyme catalyses (1S,2R)-1-C-(indol-3-yl)glycerol 3-phosphate + L-serine = D-glyceraldehyde 3-phosphate + L-tryptophan + H2O. The protein operates within amino-acid biosynthesis; L-tryptophan biosynthesis; L-tryptophan from chorismate: step 5/5. The alpha subunit is responsible for the aldol cleavage of indoleglycerol phosphate to indole and glyceraldehyde 3-phosphate. In Cupriavidus metallidurans (strain ATCC 43123 / DSM 2839 / NBRC 102507 / CH34) (Ralstonia metallidurans), this protein is Tryptophan synthase alpha chain.